The chain runs to 230 residues: PKHD-type hydroxylase PD_1553 (230 aa).

The region spanning 78-182 (RTLPPRFNRY…RIASFFWVQS (105 aa)) is the Fe2OG dioxygenase domain. Fe cation-binding residues include His96, Asp98, and His163. Position 173 (Arg173) interacts with 2-oxoglutarate.

It depends on Fe(2+) as a cofactor. Requires L-ascorbate as cofactor.

This Xylella fastidiosa (strain Temecula1 / ATCC 700964) protein is PKHD-type hydroxylase PD_1553.